The following is a 263-amino-acid chain: Phosphatidylglycerol--prolipoprotein diacylglyceryl transferase (263 aa).

The next 4 membrane-spanning stretches (helical) occupy residues 16-36 (LAVSWYSLSYVVGILFGWFYA), 55-75 (FVTYAIIGIIVGGRLGYILLY), 92-112 (EGGMSFHGGAIGVIIAAYIFC), and 117-137 (LNFLSLTDIIAPVVPIGLFFG). An a 1,2-diacyl-sn-glycero-3-phospho-(1'-sn-glycerol)-binding site is contributed by Arg138. 3 helical membrane-spanning segments follow: residues 172–192 (QLYEAFFEGLVLFCILAYAVF), 201–221 (GLNSGLFLMFYSLFRIIIEIF), and 234–254 (SLTMGQILSMPLLLLGIYLII).

The protein belongs to the Lgt family.

The protein resides in the cell inner membrane. The enzyme catalyses L-cysteinyl-[prolipoprotein] + a 1,2-diacyl-sn-glycero-3-phospho-(1'-sn-glycerol) = an S-1,2-diacyl-sn-glyceryl-L-cysteinyl-[prolipoprotein] + sn-glycerol 1-phosphate + H(+). It participates in protein modification; lipoprotein biosynthesis (diacylglyceryl transfer). Catalyzes the transfer of the diacylglyceryl group from phosphatidylglycerol to the sulfhydryl group of the N-terminal cysteine of a prolipoprotein, the first step in the formation of mature lipoproteins. The protein is Phosphatidylglycerol--prolipoprotein diacylglyceryl transferase of Rickettsia bellii (strain OSU 85-389).